We begin with the raw amino-acid sequence, 1228 residues long: Serine/threonine-protein kinase CST20 (1228 aa).

Positions 1–18 are enriched in polar residues; that stretch reads MSILSENNPTQTSITDPN. Disordered regions lie at residues 1–382 and 405–468; these read MSIL…TAHN and NSTN…HSQE. Composition is skewed to low complexity over residues 57-70 and 95-123; these read NTTS…SLGS and ESGS…NPES. Over residues 148–159 the composition is skewed to basic and acidic residues; that stretch reads HQGDDSDNEKQY. 3 stretches are compositionally biased toward polar residues: residues 173–195, 205–222, and 232–244; these read DSYS…NNVS, TSSL…NENA, and PQVS…SFHD. Residues 246–255 show a composition bias toward low complexity; that stretch reads SSVISSSTSV. Polar residues-rich tracts occupy residues 260 to 275 and 309 to 328; these read SNPT…SYKS and DTLS…TLQG. Positions 347–367 are enriched in low complexity; sequence NTSATSRNTSGTSTSTVVKNS. Residues 368 to 382 are compositionally biased toward polar residues; sequence RSGTSKLTSTSTAHN. The segment covering 437–466 has biased composition (low complexity); sequence KVRGVFSSMFGKNKSTSSSSSSNSGSNSHS. One can recognise a CRIB domain in the interval 473–486; the sequence is ISTPFNAKHLAHVG. Disordered regions lie at residues 543–829 and 865–917; these read FHFD…ALAD and LREK…KQAA. A compositionally biased stretch (polar residues) spans 548–559; that stretch reads NKSSSSGWSNEN. Gly residues predominate over residues 568-579; that stretch reads SNSGSGGGGGGA. The span at 602–611 shows a compositional bias: polar residues; it reads ITPSQSMPTK. Over residues 612 to 626 the composition is skewed to basic and acidic residues; that stretch reads TESKQSENQHPHEDN. Residues 627–640 are compositionally biased toward polar residues; the sequence is ATQYTPRTPTSHVQ. 3 stretches are compositionally biased toward low complexity: residues 668–681, 693–708, and 734–747; these read PSSQ…SQSD, ISPS…SKSL, and SIPK…SLSS. The span at 748–759 shows a compositional bias: polar residues; sequence QLRPATNGSTTA. Residues 787–805 show a composition bias toward pro residues; sequence APPPPPSASPAPPVPPAPP. A compositionally biased stretch (polar residues) spans 809 to 824; the sequence is LSEQTSEIPQQRTAPS. Residues 865 to 874 are compositionally biased toward basic and acidic residues; it reads LREKNERQNR. Residues 875–890 show a composition bias toward polar residues; that stretch reads QQETGQNNADTASGGS. The region spanning 951-1203 is the Protein kinase domain; the sequence is YVDLVKIGQG…ADELLHDNFI (253 aa). ATP contacts are provided by residues 957–965 and Lys981; that span reads IGQGASGGV. Asp1071 functions as the Proton acceptor in the catalytic mechanism.

It belongs to the protein kinase superfamily. STE Ser/Thr protein kinase family. STE20 subfamily.

It is found in the cytoplasm. The protein localises to the nucleus. It catalyses the reaction L-seryl-[protein] + ATP = O-phospho-L-seryl-[protein] + ADP + H(+). It carries out the reaction L-threonyl-[protein] + ATP = O-phospho-L-threonyl-[protein] + ADP + H(+). Functionally, MAP4K component of the MAPK pathway required for the mating pheromone response, and the regulation of cell polarity and cell cycle. Phosphorylates histone H2B to form H2BS10ph. Required for hyphal formation and virulence. This Candida albicans (strain SC5314 / ATCC MYA-2876) (Yeast) protein is Serine/threonine-protein kinase CST20 (CST20).